Consider the following 187-residue polypeptide: Sodium/potassium ATPase inhibitor SPAI-2 (187 aa).

The signal sequence occupies residues 1 to 21 (MRSRSFLVLVAVFLICETLVA). The residue at position 22 (Q22) is a Pyrrolidone carboxylic acid. Positions 22-126 (QRLDRIRGPK…NAQLPDKVQD (105 aa)) are excised as a propeptide. Positions 28-98 (RGPKGQGQDP…QDPVKAELPD (71 aa)) are disordered. Tandem repeats lie at residues 34 to 39 (GQDPVE), 40 to 45 (GQDQDE), 46 to 51 (GPGPVK), 58 to 63 (GQDPVK), 64 to 69 (GQDPVK), 70 to 75 (GQDPVK), 76 to 81 (GQDPVK), 82 to 87 (GQDLVK), 88 to 93 (SQDPVK), 100 to 105 (GQDVVK), 106 to 111 (GHEPVE), 112 to 117 (GQDPVN), 118 to 123 (AQLPDK), and 124 to 129 (VQDPVK). A 14 X 6 AA approximate tandem repeats region spans residues 34–129 (GQDPVEGQDQ…LPDKVQDPVK (96 aa)). One copy of the SVP-1 clotting 1 repeat lies at 64–85 (GQDPVKGQDPVKGQDPVKGQDL). The WAP domain maps to 139–187 (LLSKRGHCPRILFRCPLSNPSNKCWRDYDCPGVKKCCEGFCGKDCLYPK). 4 cysteine pairs are disulfide-bonded: C146–C175, C153–C179, C162–C174, and C168–C183.

The short form (AA 127-187) may be an artifact due to the strongly acidic conditions of the duodenum. The pro-SPAI form may be the native form. As to expression, small intestine &gt; large intestine. The plasma contains the pro-SPAI form circulating.

In terms of biological role, inhibits Na(+),K(+) ATPase by the competitive mode against Na(+). The protein is Sodium/potassium ATPase inhibitor SPAI-2 of Sus scrofa (Pig).